Here is an 80-residue protein sequence, read N- to C-terminus: Cell division activator CedA (80 aa).

Belongs to the CedA family.

Activates the cell division inhibited by chromosomal DNA over-replication. This chain is Cell division activator CedA, found in Escherichia coli (strain SMS-3-5 / SECEC).